The following is a 268-amino-acid chain: Esterase PIR7B (268 aa).

S86 functions as the Acyl-ester intermediate in the catalytic mechanism. Catalysis depends on charge relay system residues D218 and H246.

Belongs to the AB hydrolase superfamily.

Functionally, exhibits esterase activity towards naphthol AS-acetate in vitro. This chain is Esterase PIR7B (PIR7B), found in Oryza sativa subsp. japonica (Rice).